Consider the following 472-residue polypeptide: Inactive CLIP domain-containing serine protease A3 (472 aa).

2 helical membrane passes run 51-71 (ISFV…WSSM) and 78-98 (LPAL…HTYA). Residues asparagine 122, asparagine 133, asparagine 149, and asparagine 152 are each glycosylated (N-linked (GlcNAc...) asparagine). A Peptidase S1 domain is found at 223–470 (VAAAKAPAAG…YVPWITSTVS (248 aa)). 3 disulfides stabilise this stretch: cysteine 354–cysteine 428, cysteine 386–cysteine 408, and cysteine 418–cysteine 446.

The protein belongs to the peptidase S1 family. CLIP subfamily. As to expression, expressed at highest levels in head and salivary gland. Expressed in ovary and carcass. Minimal expression in midgut.

It localises to the membrane. Its function is as follows. Probable inactive serine protease. Induces migration of cultured mouse embryonic fibroblasts. (Microbial infection) Promotes dengue virus type 2 replication in the host. The protein is Inactive CLIP domain-containing serine protease A3 of Aedes aegypti (Yellowfever mosquito).